Here is a 314-residue protein sequence, read N- to C-terminus: DNA-directed RNA polymerase subunit alpha (314 aa).

The alpha N-terminal domain (alpha-NTD) stretch occupies residues M1 to T228. The alpha C-terminal domain (alpha-CTD) stretch occupies residues E246 to D314.

The protein belongs to the RNA polymerase alpha chain family. Homodimer. The RNAP catalytic core consists of 2 alpha, 1 beta, 1 beta' and 1 omega subunit. When a sigma factor is associated with the core the holoenzyme is formed, which can initiate transcription.

It catalyses the reaction RNA(n) + a ribonucleoside 5'-triphosphate = RNA(n+1) + diphosphate. Its function is as follows. DNA-dependent RNA polymerase catalyzes the transcription of DNA into RNA using the four ribonucleoside triphosphates as substrates. The chain is DNA-directed RNA polymerase subunit alpha from Bacillus velezensis (strain DSM 23117 / BGSC 10A6 / LMG 26770 / FZB42) (Bacillus amyloliquefaciens subsp. plantarum).